A 175-amino-acid polypeptide reads, in one-letter code: MIDLDSLEHIGVLGKPHGVQGECNARLTADLSTLFEEEERLFLFFELDALPVPFRLIGYREKTDDITLLRFAGIESKEEMEQYTGVSLFMERRYFDTDSIEFTWEHFIGFTVFDREGCFVGTIDDVDESTLNVLLSITTPEGKELLLPVAEDLLEEIDVPNRKLTMIIPDGLLQL.

Residues 99 to 172 form the PRC barrel domain; that stretch reads SIEFTWEHFI…KLTMIIPDGL (74 aa).

It belongs to the RimM family. Binds ribosomal protein uS19.

It is found in the cytoplasm. In terms of biological role, an accessory protein needed during the final step in the assembly of 30S ribosomal subunit, possibly for assembly of the head region. Essential for efficient processing of 16S rRNA. May be needed both before and after RbfA during the maturation of 16S rRNA. It has affinity for free ribosomal 30S subunits but not for 70S ribosomes. The chain is Ribosome maturation factor RimM from Porphyromonas gingivalis (strain ATCC BAA-308 / W83).